The primary structure comprises 364 residues: Chorismate synthase (364 aa).

Positions 47 and 53 each coordinate NADP(+). FMN is bound by residues 124 to 126 (RSS), glycine 286, 301 to 305 (KPTAT), and arginine 327.

It belongs to the chorismate synthase family. As to quaternary structure, homotetramer. It depends on FMNH2 as a cofactor.

The catalysed reaction is 5-O-(1-carboxyvinyl)-3-phosphoshikimate = chorismate + phosphate. The protein operates within metabolic intermediate biosynthesis; chorismate biosynthesis; chorismate from D-erythrose 4-phosphate and phosphoenolpyruvate: step 7/7. Catalyzes the anti-1,4-elimination of the C-3 phosphate and the C-6 proR hydrogen from 5-enolpyruvylshikimate-3-phosphate (EPSP) to yield chorismate, which is the branch point compound that serves as the starting substrate for the three terminal pathways of aromatic amino acid biosynthesis. This reaction introduces a second double bond into the aromatic ring system. This is Chorismate synthase from Acaryochloris marina (strain MBIC 11017).